The sequence spans 61 residues: Short neurotoxin 2 (61 aa).

4 disulfide bridges follow: Cys-3–Cys-23, Cys-17–Cys-40, Cys-42–Cys-53, and Cys-54–Cys-59.

Belongs to the three-finger toxin family. Short-chain subfamily. Type I alpha-neurotoxin sub-subfamily. As to expression, expressed by the venom gland.

Its subcellular location is the secreted. Its function is as follows. Binds to muscle nicotinic acetylcholine receptor (nAChR) and inhibit acetylcholine from binding to the receptor, thereby impairing neuromuscular transmission. In Naja annulifera (Banded Egyptian cobra), this protein is Short neurotoxin 2.